We begin with the raw amino-acid sequence, 159 residues long: Fatty acid-binding protein homolog 1 (159 aa).

The signal sequence occupies residues 1-17 (MCAKIALLLVLVGAASA).

The protein belongs to the calycin superfamily. Fatty-acid binding protein (FABP) family. As to expression, first detected in hypodermal precursor cells at the time of gastrulation. From the two-fold stage through to three-fold stages, expression is localized exclusively to hyp-7 but disappears in newly hatched L1s and subsequent developmental stages. Expression from L1 to adult stages is found in a single neuron in the ventral cord with a process into the nerve ring.

The protein resides in the secreted. Its function is as follows. May play a role in sequestering potentially toxic fatty acids and their peroxidation products, or it may be involved in the maintenance of the impermeable lipid layer of the eggshell. In Caenorhabditis elegans, this protein is Fatty acid-binding protein homolog 1 (lbp-1).